A 185-amino-acid polypeptide reads, in one-letter code: ATP-dependent protease subunit HslV (185 aa).

T12 is an active-site residue. Positions 168, 171, and 174 each coordinate Na(+).

This sequence belongs to the peptidase T1B family. HslV subfamily. A double ring-shaped homohexamer of HslV is capped on each side by a ring-shaped HslU homohexamer. The assembly of the HslU/HslV complex is dependent on binding of ATP.

The protein resides in the cytoplasm. It carries out the reaction ATP-dependent cleavage of peptide bonds with broad specificity.. Allosterically activated by HslU binding. Functionally, protease subunit of a proteasome-like degradation complex believed to be a general protein degrading machinery. This Cereibacter sphaeroides (strain ATCC 17029 / ATH 2.4.9) (Rhodobacter sphaeroides) protein is ATP-dependent protease subunit HslV.